Reading from the N-terminus, the 1032-residue chain is FACT complex subunit ctc-2 (1032 aa).

The disordered stretch occupies residues 446–513; it reads DEEEAQPTPK…QKEGLAKYAE (68 aa). Positions 476–508 are enriched in basic and acidic residues; it reads LRSERNTTVDEDADKRRREHQKELAQKKQKEGL. Coiled coils occupy residues 485–506, 624–658, 785–805, and 949–1010; these read DEDADKRRREHQKELAQKKQKE, DRYADIANQISNLKRDAVKKEQEKKDMEDVVEQDK, RRRRAELDRLFKSFAEKIAEA, and EVEE…RKAK. Residues 943–1032 form a disordered region; sequence NDSDDDEVEE…ERAAPKKRRK (90 aa). Composition is skewed to acidic residues over residues 944-979 and 986-1004; these read DSDDDEVEEEEEESAFEIDESELEDASESSEEDSEY and EASDEAEDSEEEEGEDWDE.

The protein belongs to the peptidase M24 family. SPT16 subfamily. In terms of assembly, forms a stable heterodimer with ctc-1/pob3. The dimer of ctc-1 and ctc-2 weakly associates with multiple molecules of nhp-1/nhp6 to form the FACT complex.

It is found in the nucleus. Its subcellular location is the chromosome. Its function is as follows. Component of the FACT complex, a general chromatin factor that acts to reorganize nucleosomes. The FACT complex is involved in multiple processes that require DNA as a template such as mRNA elongation, DNA replication and DNA repair. During transcription elongation the FACT complex acts as a histone chaperone that both destabilizes and restores nucleosomal structure. It facilitates the passage of RNA polymerase II and transcription by promoting the dissociation of one histone H2A-H2B dimer from the nucleosome, then subsequently promotes the reestablishment of the nucleosome following the passage of RNA polymerase II. The chain is FACT complex subunit ctc-2 (ctc-2) from Neurospora crassa (strain ATCC 24698 / 74-OR23-1A / CBS 708.71 / DSM 1257 / FGSC 987).